The following is a 110-amino-acid chain: Large ribosomal subunit protein uL22 (110 aa).

It belongs to the universal ribosomal protein uL22 family. Part of the 50S ribosomal subunit.

In terms of biological role, this protein binds specifically to 23S rRNA; its binding is stimulated by other ribosomal proteins, e.g. L4, L17, and L20. It is important during the early stages of 50S assembly. It makes multiple contacts with different domains of the 23S rRNA in the assembled 50S subunit and ribosome. Functionally, the globular domain of the protein is located near the polypeptide exit tunnel on the outside of the subunit, while an extended beta-hairpin is found that lines the wall of the exit tunnel in the center of the 70S ribosome. The polypeptide is Large ribosomal subunit protein uL22 (Exiguobacterium sibiricum (strain DSM 17290 / CCUG 55495 / CIP 109462 / JCM 13490 / 255-15)).